A 130-amino-acid chain; its full sequence is Small ribosomal subunit protein uS8 (130 aa).

This sequence belongs to the universal ribosomal protein uS8 family.

This is Small ribosomal subunit protein uS8 (rps22) from Agaricus bisporus (White button mushroom).